Reading from the N-terminus, the 287-residue chain is Bifunctional protein FolD (287 aa).

NADP(+)-binding positions include 160 to 162 (GRS), Ser-189, and Thr-230.

This sequence belongs to the tetrahydrofolate dehydrogenase/cyclohydrolase family. In terms of assembly, homodimer.

It catalyses the reaction (6R)-5,10-methylene-5,6,7,8-tetrahydrofolate + NADP(+) = (6R)-5,10-methenyltetrahydrofolate + NADPH. The enzyme catalyses (6R)-5,10-methenyltetrahydrofolate + H2O = (6R)-10-formyltetrahydrofolate + H(+). It functions in the pathway one-carbon metabolism; tetrahydrofolate interconversion. Functionally, catalyzes the oxidation of 5,10-methylenetetrahydrofolate to 5,10-methenyltetrahydrofolate and then the hydrolysis of 5,10-methenyltetrahydrofolate to 10-formyltetrahydrofolate. The chain is Bifunctional protein FolD from Chlamydia abortus (strain DSM 27085 / S26/3) (Chlamydophila abortus).